A 266-amino-acid polypeptide reads, in one-letter code: Integral membrane protein 2B (266 aa).

Topologically, residues Met1–Cys54 are cytoplasmic. The helical; Signal-anchor for type II membrane protein transmembrane segment at Trp55–Leu75 threads the bilayer. Over Tyr76–Ser266 the chain is Lumenal. Residues Glu102 to Val134 are necessary for interaction with APP and inhibitor effects on APP processing. Residues Phe137–Leu231 enclose the BRICHOS domain. Disulfide bonds link Cys164–Cys223 and Cys248–Cys265. The N-linked (GlcNAc...) asparagine glycan is linked to Asn170.

Belongs to the ITM2 family. In terms of assembly, homodimer; disulfide-linked. Interacts with SPPL2A and SPPL2B. Interacts with APP. Mature BRI2 (mBRI2) interacts with the APP amyloid-beta A4 protein; the interaction occurs at the cell surface and in the endocytic compartments and enable alpha- and beta-secretase-induced APP cleavage inhibition. Mature BRI2 (mBRI2) interacts with the APP C99; the interaction occurs in the endocytic compartments and enable gamma-secretase-induced C99 cleavage inhibition. May form heterodimers with Bri23 peptide and APP amyloid-beta protein 40. Interacts with ADAM7 in sperm; the interaction increases following capacitation. Post-translationally, the ectodomain C-terminal part of the imBRI2 is processed by furin producing a secreted Bri23 peptide and a mature BRI2, membrane form (mBRI2). The remaining part of the ectodomain of mBRI2 containing the BRICHOS domain is cleaved by ADAM10 and is secreted (BRI2C, soluble form). The membrane-bound N-terminal fragment (BRI2C, membrane form) is further proteolytically processed by SPPL2A and SPPL2B through regulated intramembrane proteolysis producing a secreted C-peptide and a BRI2 intracellular domain (BRI2 ICD) released in the cytosol. Shedding by ADAM10 facilitates intramembrane cleavage but is not absolutely required for BRI2 ICD generation. Glycosylation at Asn-170 is important for cell surface localization, but doesn't affect furin- and ADAM10-induced proteolytic processing.

The protein localises to the golgi apparatus membrane. Its subcellular location is the cell membrane. The protein resides in the endosome membrane. It localises to the secreted. Plays a regulatory role in the processing of the amyloid-beta A4 precursor protein (APP) and acts as an inhibitor of the amyloid-beta peptide aggregation and fibrils deposition. Plays a role in the induction of neurite outgrowth. Functions as a protease inhibitor by blocking access of secretases to APP cleavage sites. Functionally, mature BRI2 (mBRI2) functions as a modulator of the amyloid-beta A4 precursor protein (APP) processing leading to a strong reduction in the secretion of secretase-processed amyloid-beta protein 40 and amyloid-beta protein 42. Its function is as follows. Bri23 peptide prevents aggregation of APP amyloid-beta protein 42 into toxic oligomers. In Sus scrofa (Pig), this protein is Integral membrane protein 2B (ITM2B).